Reading from the N-terminus, the 298-residue chain is Developmental pluripotency-associated protein 2 (298 aa).

Positions 36 to 61 (NMEQMEPSVSSTSDVKLEKPKKYNPG) are disordered. The SAP domain occupies 92–126 (INKVCRDTLRDWCQQLGLSTNGKKIEVYLRLHRHA).

In terms of assembly, interacts with DPPA4. As to expression, expressed in embryonic stem cells. No expression is seen in 5 months embryo, mesenchymal stem cells, embryonic fibrocytes and adult tissues.

Its subcellular location is the nucleus. Functionally, binds to target gene promoters, including NKX2-5 and SYCE1, but not GATA4, and may be involved in the maintenance of the active epigenetic status of these genes. This is Developmental pluripotency-associated protein 2 (DPPA2) from Homo sapiens (Human).